The chain runs to 458 residues: UDP-N-acetylmuramoylalanine--D-glutamate ligase (458 aa).

Position 119–125 (119–125 (GSNGKTT)) interacts with ATP.

This sequence belongs to the MurCDEF family.

The protein localises to the cytoplasm. It catalyses the reaction UDP-N-acetyl-alpha-D-muramoyl-L-alanine + D-glutamate + ATP = UDP-N-acetyl-alpha-D-muramoyl-L-alanyl-D-glutamate + ADP + phosphate + H(+). Its pathway is cell wall biogenesis; peptidoglycan biosynthesis. Cell wall formation. Catalyzes the addition of glutamate to the nucleotide precursor UDP-N-acetylmuramoyl-L-alanine (UMA). The protein is UDP-N-acetylmuramoylalanine--D-glutamate ligase of Limosilactobacillus fermentum (strain NBRC 3956 / LMG 18251) (Lactobacillus fermentum).